The sequence spans 158 residues: Transcription factor BTF3 homolog 4 (158 aa).

The region spanning 33–98 is the NAC-A/B domain; sequence TADDKKLQSS…AEAKPITEML (66 aa). The disordered stretch occupies residues 124-158; sequence VLDSKAPKSEDIDEEDDDVPDLAENFDEASKNEAN. Residues 134 to 150 show a composition bias toward acidic residues; the sequence is DIDEEDDDVPDLAENFD.

This sequence belongs to the NAC-beta family.

This chain is Transcription factor BTF3 homolog 4 (BTF3L4), found in Gallus gallus (Chicken).